The primary structure comprises 93 residues: Protein Tat (93 aa).

Residues 1–24 are interaction with human CREBBP; the sequence is MEPVDPELEPWNHPGSQPKTACNN. Residues 1–48 are transactivation; the sequence is MEPVDPELEPWNHPGSQPKTACNNCHCKVCCYHCVYCFTKKGLGISYG. Residues cysteine 22, cysteine 25, and cysteine 27 each contribute to the Zn(2+) site. The interval 22 to 37 is cysteine-rich; the sequence is CNNCHCKVCCYHCVYC. Lysine 28 is modified (N6-acetyllysine; by host PCAF). Residues cysteine 30, histidine 33, cysteine 34, and cysteine 37 each contribute to the Zn(2+) site. The interval 38–48 is core; that stretch reads FTKKGLGISYG. Residues 48 to 58 show a composition bias toward basic residues; that stretch reads GRKKRSQRRRT. The tract at residues 48–93 is disordered; it reads GRKKRSQRRRTPQSNKSHQDPLPKQPLSQRLGDQTGQKEQKKTLES. Positions 49–57 match the Nuclear localization signal, RNA-binding (TAR), and protein transduction motif; the sequence is RKKRSQRRR. The tract at residues 49–86 is interaction with the host capping enzyme RNGTT; sequence RKKRSQRRRTPQSNKSHQDPLPKQPLSQRLGDQTGQKE. An N6-acetyllysine; by host EP300 and GCN5L2 mark is found at lysine 50 and lysine 51. Asymmetric dimethylarginine; by host PRMT6 is present on arginine 52. Lysine 71 participates in a covalent cross-link: Glycyl lysine isopeptide (Lys-Gly) (interchain with G-Cter in ubiquitin). Residues 73-82 show a composition bias toward polar residues; sequence PLSQRLGDQT. A compositionally biased stretch (basic and acidic residues) spans 83–93; that stretch reads GQKEQKKTLES.

The protein belongs to the lentiviruses Tat family. Interacts with host CCNT1. Associates with the P-TEFb complex composed at least of Tat, P-TEFb (CDK9 and CCNT1), TAR RNA, RNA Pol II. Recruits the HATs CREBBP, TAF1/TFIID, EP300, PCAF and GCN5L2. Interacts with host KAT5/Tip60; this interaction targets the latter to degradation. Interacts with the host deacetylase SIRT1. Interacts with host capping enzyme RNGTT; this interaction stimulates RNGTT. Binds to host KDR, and to the host integrins ITGAV/ITGB3 and ITGA5/ITGB1. Interacts with host KPNB1/importin beta-1 without previous binding to KPNA1/importin alpha-1. Interacts with EIF2AK2. Interacts with host nucleosome assembly protein NAP1L1; this interaction may be required for the transport of Tat within the nucleus, since the two proteins interact at the nuclear rim. Interacts with host C1QBP/SF2P32; this interaction involves lysine-acetylated Tat. Interacts with the host chemokine receptors CCR2, CCR3 and CXCR4. Interacts with host DPP4/CD26; this interaction may trigger an anti-proliferative effect. Interacts with host LDLR. Interacts with the host extracellular matrix metalloproteinase MMP1. Interacts with host PRMT6; this interaction mediates Tat's methylation. Interacts with, and is ubiquitinated by MDM2/Hdm2. Interacts with host PSMC3 and HTATIP2. Interacts with STAB1; this interaction may overcome SATB1-mediated repression of IL2 and IL2RA (interleukin) in T cells by binding to the same domain than HDAC1. Interacts (when acetylated) with human CDK13, thereby increasing HIV-1 mRNA splicing and promoting the production of the doubly spliced HIV-1 protein Nef. Interacts with host TBP; this interaction modulates the activity of transcriptional pre-initiation complex. Interacts with host RELA. Post-translationally, asymmetrical arginine methylation by host PRMT6 seems to diminish the transactivation capacity of Tat and affects the interaction with host CCNT1. Acetylation by EP300, CREBBP, GCN5L2/GCN5 and PCAF regulates the transactivation activity of Tat. EP300-mediated acetylation of Lys-50 promotes dissociation of Tat from the TAR RNA through the competitive binding to PCAF's bromodomain. In addition, the non-acetylated Tat's N-terminus can also interact with PCAF. PCAF-mediated acetylation of Lys-28 enhances Tat's binding to CCNT1. Lys-50 is deacetylated by SIRT1. In terms of processing, polyubiquitination by host MDM2 does not target Tat to degradation, but activates its transactivation function and fosters interaction with CCNT1 and TAR RNA. Post-translationally, phosphorylated by EIF2AK2 on serine and threonine residues adjacent to the basic region important for TAR RNA binding and function. Phosphorylation of Tat by EIF2AK2 is dependent on the prior activation of EIF2AK2 by dsRNA.

The protein resides in the host nucleus. It localises to the host nucleolus. Its subcellular location is the host cytoplasm. It is found in the secreted. Functionally, transcriptional activator that increases RNA Pol II processivity, thereby increasing the level of full-length viral transcripts. Recognizes a hairpin structure at the 5'-LTR of the nascent viral mRNAs referred to as the transactivation responsive RNA element (TAR) and recruits the cyclin T1-CDK9 complex (P-TEFb complex) that will in turn hyperphosphorylate the RNA polymerase II to allow efficient elongation. The CDK9 component of P-TEFb and other Tat-activated kinases hyperphosphorylate the C-terminus of RNA Pol II that becomes stabilized and much more processive. Other factors such as HTATSF1/Tat-SF1, SUPT5H/SPT5, and HTATIP2 are also important for Tat's function. Besides its effect on RNA Pol II processivity, Tat induces chromatin remodeling of proviral genes by recruiting the histone acetyltransferases (HATs) CREBBP, EP300 and PCAF to the chromatin. This also contributes to the increase in proviral transcription rate, especially when the provirus integrates in transcriptionally silent region of the host genome. To ensure maximal activation of the LTR, Tat mediates nuclear translocation of NF-kappa-B by interacting with host RELA. Through its interaction with host TBP, Tat may also modulate transcription initiation. Tat can reactivate a latently infected cell by penetrating in it and transactivating its LTR promoter. In the cytoplasm, Tat is thought to act as a translational activator of HIV-1 mRNAs. Its function is as follows. Extracellular circulating Tat can be endocytosed by surrounding uninfected cells via the binding to several surface receptors such as CD26, CXCR4, heparan sulfate proteoglycans (HSPG) or LDLR. Neurons are rarely infected, but they internalize Tat via their LDLR. Through its interaction with nuclear HATs, Tat is potentially able to control the acetylation-dependent cellular gene expression. Modulates the expression of many cellular genes involved in cell survival, proliferation or in coding for cytokines or cytokine receptors. Tat plays a role in T-cell and neurons apoptosis. Tat induced neurotoxicity and apoptosis probably contribute to neuroAIDS. Circulating Tat also acts as a chemokine-like and/or growth factor-like molecule that binds to specific receptors on the surface of the cells, affecting many cellular pathways. In the vascular system, Tat binds to ITGAV/ITGB3 and ITGA5/ITGB1 integrins dimers at the surface of endothelial cells and competes with bFGF for heparin-binding sites, leading to an excess of soluble bFGF. This Pan troglodytes (Chimpanzee) protein is Protein Tat.